The primary structure comprises 463 residues: Argininosuccinate lyase (463 aa).

It belongs to the lyase 1 family. Argininosuccinate lyase subfamily.

It is found in the cytoplasm. It carries out the reaction 2-(N(omega)-L-arginino)succinate = fumarate + L-arginine. The protein operates within amino-acid biosynthesis; L-arginine biosynthesis; L-arginine from L-ornithine and carbamoyl phosphate: step 3/3. The protein is Argininosuccinate lyase of Streptococcus pneumoniae (strain JJA).